Here is a 497-residue protein sequence, read N- to C-terminus: MEKKYILALDQGTTSSRAMIIDEEGEVIGVAQEEFDQIFPKPGWVEHSANEIWASILAVIAGVLLKTNISSKEIAGIGITNQRETTVIWDKESGNPIYNAIVWQSRQTEDICKQLRKDGYEDTIRSKTGLLIDPYFAGTKARWILDHVDGAQERAEKGELLFGTIDTWLVWKLTGGRAHITDYSNASRTLLYNIYDLEWDDELLKMLNIPRAMLPEVRPSSEVYADTVPYHFFGEEVPVAGIAGDQQAALFGQGCFEKGMAKNTYGTGCFLLMNTGEKAVRSENGLLTTLAWGIDGKVEYALEGSIFVAGSAIQWLRDGLRMVRQSSDSENYASRIESSDGVYVVPAFVGLGAPYWDSDVRGAVFGLTRGTEKEQFIRATLESLAYQTRDVLYAMEQDSGISLKTLRVDGGASANNFLMQFQSDILGVPVERPENKETTVLGAAFLAGLAVGVWKDKNEIKKHWKLDKRFEVEMKEEQREDLYDGWHKAVKAAQAFK.

Thr13 provides a ligand contact to ADP. Residues Thr13, Thr14, and Ser15 each contribute to the ATP site. Thr13 contributes to the sn-glycerol 3-phosphate binding site. Arg17 lines the ADP pocket. Residues Arg83, Glu84, and Tyr135 each coordinate sn-glycerol 3-phosphate. The glycerol site is built by Arg83, Glu84, and Tyr135. His231 carries the phosphohistidine; by HPr modification. A sn-glycerol 3-phosphate-binding site is contributed by Asp245. Glycerol contacts are provided by Asp245 and Gln246. Positions 267 and 310 each coordinate ADP. Positions 267, 310, 314, and 411 each coordinate ATP. Gly411 and Asn415 together coordinate ADP.

Belongs to the FGGY kinase family. As to quaternary structure, homotetramer and homodimer (in equilibrium). The phosphoenolpyruvate-dependent sugar phosphotransferase system (PTS), including enzyme I, and histidine-containing protein (HPr) are required for the phosphorylation, which leads to the activation of the enzyme.

It carries out the reaction glycerol + ATP = sn-glycerol 3-phosphate + ADP + H(+). It functions in the pathway polyol metabolism; glycerol degradation via glycerol kinase pathway; sn-glycerol 3-phosphate from glycerol: step 1/1. Its activity is regulated as follows. Activated by phosphorylation and inhibited by fructose 1,6-bisphosphate (FBP). Its function is as follows. Key enzyme in the regulation of glycerol uptake and metabolism. Catalyzes the phosphorylation of glycerol to yield sn-glycerol 3-phosphate. In Listeria welshimeri serovar 6b (strain ATCC 35897 / DSM 20650 / CCUG 15529 / CIP 8149 / NCTC 11857 / SLCC 5334 / V8), this protein is Glycerol kinase.